A 1692-amino-acid chain; its full sequence is Adenylate cyclase (1692 aa).

Disordered regions lie at residues 1–22 and 103–142; these read MDQSKRLLKSAVPNPPEHFKTG and SLSDTGRTKSDTALAARESSEKSEVPRDTRSAGIKPYKEN. Positions 120 to 132 are enriched in basic and acidic residues; sequence ESSEKSEVPRDTR. A required for interaction with gpa2 region spans residues 174–195; sequence FTNLTFPEPISDDSDSVEFQRD. One can recognise a Ras-associating domain in the interval 292–380; sequence KEFFLRVYRD…SDEEINEEDN (89 aa). LRR repeat units follow at residues 430–450, 454–474, 477–498, 503–524, 526–547, 549–570, 572–594, 596–617, 618–639, 660–681, 684–705, 707–729, 730–751, 753–774, 783–805, 807–827, 831–852, 855–876, 878–899, 901–922, and 930–951; these read ELISLNVSHNLSLDLPLDFME, KLKRLDISNNLRSPRGKPITA, QLEVLNMSRNDIYELDPLIFSG, SLKELNIANNKLFFLPHSTRYL, NLTYLDLSYNNFVTFPLIITEL, QLETLNFSHNLLSQISSKIGSL, KLKHLYLQFNDLSNRLPQEIGLL, NLETIDLSYNAITNIASLSECP, KLNSINVACNLLSFYEYSNPSA, NLVYFDISHAKLIGLKDSVIET, NVETVKVNYNHFTSISDAISAM, NLKYLSCTNCEMSYVSPNLGKLK, HLVHLDLHANNIKIFPEEVWQV, SLKVVNLSSNILEKIKLPVATS, QLKIMRTLSGNPVSSLSSQEFVM, TVEELYLVDNRLGNDCFTALE, CLKVLNLSYNYLTEIPSKFFQN, DLKHLFVSGNELANLSISSTAQ, LLETLYANGNRLSSFPKNEALS, SLRFLDISTNNLQNLAVEKAEK, and QLEYLNLSGNTWFRFSEHEDTN. Residues 995–1275 form the PPM-type phosphatase domain; it reads RYGVCGYLSR…KNVLVVIVEL (281 aa). The region spanning 1332–1469 is the Guanylate cyclase domain; the sequence is AMVFTDIKNS…PVVNRTSRVV (138 aa). Residues D1337 and D1380 each contribute to the Mg(2+) site. Positions 1337 and 1380 each coordinate Mn(2+). Positions 1585-1597 are enriched in basic and acidic residues; that stretch reads SDSKSVHGEEGGS. Residues 1585–1614 are disordered; that stretch reads SDSKSVHGEEGGSGKRSVSSLRNVSPSEST. Over residues 1600–1614 the composition is skewed to polar residues; it reads RSVSSLRNVSPSEST.

This sequence belongs to the adenylyl cyclase class-3 family. Interacts (via N-terminus) with gpa2; the interaction is direct and serves to activate adenylate cyclase and cAMP-PKA signaling, to repress sexual development and gluconeogenesis. Interacts with git1. The cofactor is Mn(2+).

The protein localises to the cytoplasm. The enzyme catalyses ATP = 3',5'-cyclic AMP + diphosphate. With respect to regulation, activated by binding G protein gpa2. Activated by git1. In contrast to yeast cyclase, S.pombe cyclase is not likely to be regulated by RAS proteins. Functionally, acts in glucose-induced cAMP signaling by catalyzing the synthesis of the second messenger, cAMP to activate PKA signaling and repress sexual development and gluconeogenesis. This is Adenylate cyclase from Schizosaccharomyces pombe (strain 972 / ATCC 24843) (Fission yeast).